The chain runs to 263 residues: Indole-3-glycerol phosphate synthase (263 aa).

It belongs to the TrpC family.

The catalysed reaction is 1-(2-carboxyphenylamino)-1-deoxy-D-ribulose 5-phosphate + H(+) = (1S,2R)-1-C-(indol-3-yl)glycerol 3-phosphate + CO2 + H2O. Its pathway is amino-acid biosynthesis; L-tryptophan biosynthesis; L-tryptophan from chorismate: step 4/5. This is Indole-3-glycerol phosphate synthase from Rhodospirillum rubrum (strain ATCC 11170 / ATH 1.1.1 / DSM 467 / LMG 4362 / NCIMB 8255 / S1).